The following is a 379-amino-acid chain: Protein COS2 (379 aa).

The Cytoplasmic portion of the chain corresponds to M1–P72. Residues L73–L93 form a helical membrane-spanning segment. The Extracellular portion of the chain corresponds to S94–G254. The helical transmembrane segment at M255–F275 threads the bilayer. Over Q276 to V379 the chain is Cytoplasmic.

The protein belongs to the DUP/COS family.

The protein resides in the membrane. This Saccharomyces cerevisiae (strain ATCC 204508 / S288c) (Baker's yeast) protein is Protein COS2 (COS2).